A 36-amino-acid chain; its full sequence is Collagen alpha-2(I) chain (36 aa).

A disordered region spans residues glycine 1–arginine 36. Proline 6 and proline 12 each carry 4-hydroxyproline. Residues alanine 15 to proline 29 are compositionally biased toward low complexity. Position 33 is a 4-hydroxyproline (proline 33).

This sequence belongs to the fibrillar collagen family. Trimers of one alpha 2(I) and two alpha 1(I) chains. In terms of processing, proline residues at the third position of the tripeptide repeating unit (G-X-Y) are hydroxylated in some or all of the chains.

It is found in the secreted. Its subcellular location is the extracellular space. The protein localises to the extracellular matrix. In terms of biological role, type I collagen is a member of group I collagen (fibrillar forming collagen). The chain is Collagen alpha-2(I) chain from Brachylophosaurus canadensis (Campanian hadrosaur).